We begin with the raw amino-acid sequence, 115 residues long: Probable non-functional T cell receptor beta variable 7-3 (115 aa).

The N-terminal stretch at 1–21 (MGTRLLCWAALCLLGADHTGA) is a signal peptide. Residues 22 to 115 (GVSQTPSNKV…SAAYLRASSL (94 aa)) enclose the Ig-like domain.

As to quaternary structure, most probably, the alpha-beta TR is not assembled due to incorrect folding of the beta chain. Alpha-beta TR is a heterodimer composed of an alpha and beta chain; disulfide-linked. The alpha-beta TR is associated with the transmembrane signaling CD3 coreceptor proteins to form the TR-CD3 (TcR or TCR). The assembly of alpha-beta TR heterodimers with CD3 occurs in the endoplasmic reticulum where a single alpha-beta TR heterodimer associates with one CD3D-CD3E heterodimer, one CD3G-CD3E heterodimer and one CD247 homodimer forming a stable octameric structure. CD3D-CD3E and CD3G-CD3E heterodimers preferentially associate with TR alpha and TR beta chains, respectively. The association of the CD247 homodimer is the last step of TcR assembly in the endoplasmic reticulum and is required for transport to the cell surface.

It is found in the cell membrane. Probable non-functional open reading frame (ORF) of V region of the variable domain of T cell receptor (TR) beta chain. Non-functional ORF generally cannot participate in the synthesis of a productive T cell receptor (TR) chain due to altered V-(D)-J or switch recombination and/or splicing site (at mRNA level) and/or conserved amino acid change (protein level). Alpha-beta T cell receptors are antigen specific receptors which are essential to the immune response and are present on the cell surface of T lymphocytes. Recognize peptide-major histocompatibility (MH) (pMH) complexes that are displayed by antigen presenting cells (APC), a prerequisite for efficient T cell adaptive immunity against pathogens. Binding of alpha-beta TR to pMH complex initiates TR-CD3 clustering on the cell surface and intracellular activation of LCK that phosphorylates the ITAM motifs of CD3G, CD3D, CD3E and CD247 enabling the recruitment of ZAP70. In turn ZAP70 phosphorylates LAT, which recruits numerous signaling molecules to form the LAT signalosome. The LAT signalosome propagates signal branching to three major signaling pathways, the calcium, the mitogen-activated protein kinase (MAPK) kinase and the nuclear factor NF-kappa-B (NF-kB) pathways, leading to the mobilization of transcription factors that are critical for gene expression and essential for T cell growth and differentiation. The T cell repertoire is generated in the thymus, by V-(D)-J rearrangement. This repertoire is then shaped by intrathymic selection events to generate a peripheral T cell pool of self-MH restricted, non-autoaggressive T cells. Post-thymic interaction of alpha-beta TR with the pMH complexes shapes TR structural and functional avidity. This Homo sapiens (Human) protein is Probable non-functional T cell receptor beta variable 7-3.